Reading from the N-terminus, the 211-residue chain is Protein GrpE (211 aa).

Basic and acidic residues predominate over residues 1–10 (MTDDTKKPGP). Disordered regions lie at residues 1–37 (MTDDTKKPGPDADVAEEFVDPAQAGEEQAETAEPDPV) and 187–211 (AKGGPKAEPSASAEPGTSSLNEKDA). A compositionally biased stretch (acidic residues) spans 27 to 36 (EQAETAEPDP). Residues 201–211 (PGTSSLNEKDA) are compositionally biased toward polar residues.

Belongs to the GrpE family. In terms of assembly, homodimer.

It is found in the cytoplasm. Participates actively in the response to hyperosmotic and heat shock by preventing the aggregation of stress-denatured proteins, in association with DnaK and GrpE. It is the nucleotide exchange factor for DnaK and may function as a thermosensor. Unfolded proteins bind initially to DnaJ; upon interaction with the DnaJ-bound protein, DnaK hydrolyzes its bound ATP, resulting in the formation of a stable complex. GrpE releases ADP from DnaK; ATP binding to DnaK triggers the release of the substrate protein, thus completing the reaction cycle. Several rounds of ATP-dependent interactions between DnaJ, DnaK and GrpE are required for fully efficient folding. The chain is Protein GrpE from Agrobacterium fabrum (strain C58 / ATCC 33970) (Agrobacterium tumefaciens (strain C58)).